The primary structure comprises 549 residues: RNA-induced transcriptional silencing complex protein tas3 (549 aa).

Disordered regions lie at residues 89-111 (KNSP…VRAS), 126-184 (DGKE…SDSI), 202-225 (IRSS…SSKS), 298-361 (LDNF…HLEK), and 381-430 (AHFH…PLAS). Residues 298–307 (LDNFNRPSQQ) show a composition bias toward polar residues. Basic and acidic residues-rich tracts occupy residues 328 to 361 (YDSY…HLEK) and 403 to 416 (SDRQ…ELPT). The span at 419–430 (LNASDSHNPLAS) shows a compositional bias: polar residues.

In terms of assembly, ago1, chp1 and tas3 interact to form the core of the RNA-induced transcriptional silencing (RITS) complex. The RITS complex interacts with the RDRC complex via interaction between ago1 and hrr1. Clr4 has a role in mediating this interaction.

The protein localises to the nucleus. The protein resides in the cytoplasm. It is found in the cytoskeleton. It localises to the microtubule organizing center. Its subcellular location is the spindle pole body. Has a role in the RNA interference (RNAi) pathway which is important for heterochromatin formation and accurate chromosome segregation. A member of the RNA-induced transcriptional silencing (RITS) complex which is involved in the biosynthesis of dsRNA from primer siRNAs provided by the RNA-directed RNA polymerase (RDRC) complex. This Schizosaccharomyces pombe (strain 972 / ATCC 24843) (Fission yeast) protein is RNA-induced transcriptional silencing complex protein tas3 (tas3).